A 241-amino-acid chain; its full sequence is 1-(5-phosphoribosyl)-5-[(5-phosphoribosylamino)methylideneamino] imidazole-4-carboxamide isomerase (241 aa).

Asp7 functions as the Proton acceptor in the catalytic mechanism. The active-site Proton donor is Asp129.

This sequence belongs to the HisA/HisF family.

Its subcellular location is the cytoplasm. The catalysed reaction is 1-(5-phospho-beta-D-ribosyl)-5-[(5-phospho-beta-D-ribosylamino)methylideneamino]imidazole-4-carboxamide = 5-[(5-phospho-1-deoxy-D-ribulos-1-ylimino)methylamino]-1-(5-phospho-beta-D-ribosyl)imidazole-4-carboxamide. It participates in amino-acid biosynthesis; L-histidine biosynthesis; L-histidine from 5-phospho-alpha-D-ribose 1-diphosphate: step 4/9. The protein is 1-(5-phosphoribosyl)-5-[(5-phosphoribosylamino)methylideneamino] imidazole-4-carboxamide isomerase of Buchnera aphidicola subsp. Baizongia pistaciae (strain Bp).